Consider the following 559-residue polypeptide: Spermidine/putrescine import ATP-binding protein PotA (559 aa).

In terms of domain architecture, ABC transporter spans 7–448 (IEIEGLNKTF…PKTEWIANFI (442 aa)). 40-47 (GPSGCGKT) contributes to the ATP binding site. An insert region spans residues 108-317 (WTKLDEIPKL…EAFEKRYLSR (210 aa)).

The protein belongs to the ABC transporter superfamily. Spermidine/putrescine importer (TC 3.A.1.11.1) family. The complex is composed of two ATP-binding proteins (PotA), two transmembrane proteins (PotB and PotC) and a solute-binding protein (PotD).

The protein localises to the cell membrane. The catalysed reaction is ATP + H2O + polyamine-[polyamine-binding protein]Side 1 = ADP + phosphate + polyamineSide 2 + [polyamine-binding protein]Side 1.. Functionally, part of the ABC transporter complex PotABCD involved in spermidine/putrescine import. Responsible for energy coupling to the transport system. This chain is Spermidine/putrescine import ATP-binding protein PotA, found in Mycoplasma genitalium (strain ATCC 33530 / DSM 19775 / NCTC 10195 / G37) (Mycoplasmoides genitalium).